The primary structure comprises 291 residues: Alpha-soluble NSF attachment protein (291 aa).

TPR repeat units follow at residues 14-51, 77-110, 117-150, and 157-190; these read ADKRLRGGNFFKMFGGGSSRYDDAASDYTKAANLFKMS, AASSYVLAAGCYKKGNVIDAITCLKAAIEYYTDE, AKHQKEIAELYEAEGDFDQAIASYQIASDYFDGE, and HQCLLKIALFSAQLERYEKSIEIYEQVAAASLDN.

Belongs to the SNAP family. As to quaternary structure, interacts with nsfA and probably SNARE proteins.

It localises to the cytoplasmic vesicle membrane. Functionally, may be required for vesicular transport between the endoplasmic reticulum and the Golgi apparatus. Involved in vesicle fusion with nsfA and probably SNARE proteins. This chain is Alpha-soluble NSF attachment protein (snpA), found in Dictyostelium discoideum (Social amoeba).